The chain runs to 87 residues: Antitoxin epsilon (87 aa).

The protein belongs to the epsilon antitoxin family. In the presence of the zeta toxin, forms an inactive PezA(2)PezT(2) heterotetramer.

Antitoxin component of a type II toxin-antitoxin (TA) system. Neutralizes the toxic effect of cognate zeta toxin. Part of a postsegregational killing (PSK) system involved in the killing of plasmid-free cells. Continuous synthesis of the epsilon antitoxin is required to counteract the zeta toxin. The sequence is that of Antitoxin epsilon from Lactococcus lactis subsp. lactis (Streptococcus lactis).